A 281-amino-acid chain; its full sequence is uncharacterized protein (281 aa).

A run of 4 helical transmembrane segments spans residues 8-28 (ALPV…FIWS), 97-117 (LAVA…RGYG), 147-167 (PARI…GLAV), and 210-230 (IASV…IVPA).

To S.pombe bem46 and yeast YNL320w.

It is found in the cell membrane. This is an uncharacterized protein from Mycobacterium tuberculosis (strain CDC 1551 / Oshkosh).